The chain runs to 265 residues: 4-hydroxy-tetrahydrodipicolinate reductase (265 aa).

NAD(+)-binding positions include G7–M12 and D33. Residue R34 coordinates NADP(+). NAD(+)-binding positions include G96–T98 and A120–M123. Catalysis depends on H153, which acts as the Proton donor/acceptor. Residue H154 coordinates (S)-2,3,4,5-tetrahydrodipicolinate. The active-site Proton donor is K157. G163–T164 contacts (S)-2,3,4,5-tetrahydrodipicolinate.

Belongs to the DapB family.

Its subcellular location is the cytoplasm. The catalysed reaction is (S)-2,3,4,5-tetrahydrodipicolinate + NAD(+) + H2O = (2S,4S)-4-hydroxy-2,3,4,5-tetrahydrodipicolinate + NADH + H(+). It catalyses the reaction (S)-2,3,4,5-tetrahydrodipicolinate + NADP(+) + H2O = (2S,4S)-4-hydroxy-2,3,4,5-tetrahydrodipicolinate + NADPH + H(+). Its pathway is amino-acid biosynthesis; L-lysine biosynthesis via DAP pathway; (S)-tetrahydrodipicolinate from L-aspartate: step 4/4. In terms of biological role, catalyzes the conversion of 4-hydroxy-tetrahydrodipicolinate (HTPA) to tetrahydrodipicolinate. The polypeptide is 4-hydroxy-tetrahydrodipicolinate reductase (Burkholderia multivorans (strain ATCC 17616 / 249)).